The sequence spans 924 residues: Type II inositol 3,4-bisphosphate 4-phosphatase (924 aa).

Residues 1 to 13 (MEIKEEGASEEGQ) show a composition bias toward basic and acidic residues. 3 disordered regions span residues 1 to 25 (MEIK…SDPG), 481 to 516 (ILKK…HSDY), and 546 to 569 (DGGS…DAIP). The C2 domain maps to 23–165 (DPGDCQFTSI…LKSKEQLLVL (143 aa)).

It belongs to the inositol 3,4-bisphosphate 4-phosphatase family.

The catalysed reaction is a 1,2-diacyl-sn-glycero-3-phospho-(1D-myo-inositol-3,4-bisphosphate) + H2O = a 1,2-diacyl-sn-glycero-3-phospho-(1D-myo-inositol-3-phosphate) + phosphate. It carries out the reaction 1D-myo-inositol 1,3,4-trisphosphate + H2O = 1D-myo-inositol 1,3-bisphosphate + phosphate. The enzyme catalyses 1D-myo-inositol 3,4-bisphosphate + H2O = 1D-myo-inositol 3-phosphate + phosphate. It functions in the pathway signal transduction; phosphatidylinositol signaling pathway. Its activity is regulated as follows. Strongly inhibited by inositol hexakisphosphate. In terms of biological role, catalyzes the hydrolysis of the 4-position phosphate of phosphatidylinositol 3,4-bisphosphate, inositol 1,3,4-trisphosphate and inositol 3,4-bisphosphate. Plays a role in the late stages of macropinocytosis by dephosphorylating phosphatidylinositol 3,4-bisphosphate in membrane ruffles. Antagonizes the PI3K-AKT/PKB signaling pathway by dephosphorylating phosphoinositides and thereby modulating cell cycle progression and cell survival. This Pongo abelii (Sumatran orangutan) protein is Type II inositol 3,4-bisphosphate 4-phosphatase (INPP4B).